A 363-amino-acid polypeptide reads, in one-letter code: Spermidine/putrescine import ATP-binding protein PotA (363 aa).

The 232-residue stretch at 5 to 236 (IKLKHVRKEY…PVNDFVARFI (232 aa)) folds into the ABC transporter domain. Residue 38–45 (GPSGSGKT) coordinates ATP.

It belongs to the ABC transporter superfamily. Spermidine/putrescine importer (TC 3.A.1.11.1) family. The complex is composed of two ATP-binding proteins (PotA), two transmembrane proteins (PotB and PotC) and a solute-binding protein (PotD).

It is found in the cell membrane. It catalyses the reaction ATP + H2O + polyamine-[polyamine-binding protein]Side 1 = ADP + phosphate + polyamineSide 2 + [polyamine-binding protein]Side 1.. Part of the ABC transporter complex PotABCD involved in spermidine/putrescine import. Responsible for energy coupling to the transport system. This is Spermidine/putrescine import ATP-binding protein PotA from Lactobacillus johnsonii (strain CNCM I-12250 / La1 / NCC 533).